Here is an 82-residue protein sequence, read N- to C-terminus: Protein C14 (82 aa).

The chain is Protein C14 from Homo sapiens (Human).